Here is a 314-residue protein sequence, read N- to C-terminus: DNA-directed RNA polymerase subunit alpha (314 aa).

The segment at 1 to 228 (MIEIEKPRIE…EHLNIFVGLT (228 aa)) is alpha N-terminal domain (alpha-NTD). Positions 245-314 (KEKVLEMSIE…DLGLGLRKED (70 aa)) are alpha C-terminal domain (alpha-CTD).

Belongs to the RNA polymerase alpha chain family. In terms of assembly, homodimer. The RNAP catalytic core consists of 2 alpha, 1 beta, 1 beta' and 1 omega subunit. When a sigma factor is associated with the core the holoenzyme is formed, which can initiate transcription.

It catalyses the reaction RNA(n) + a ribonucleoside 5'-triphosphate = RNA(n+1) + diphosphate. DNA-dependent RNA polymerase catalyzes the transcription of DNA into RNA using the four ribonucleoside triphosphates as substrates. The sequence is that of DNA-directed RNA polymerase subunit alpha from Staphylococcus haemolyticus (strain JCSC1435).